We begin with the raw amino-acid sequence, 329 residues long: Beta-ketoacyl-[acyl-carrier-protein] synthase III (329 aa).

Active-site residues include Cys-113 and His-255. The ACP-binding stretch occupies residues 256–260 (QANQR). Asn-285 is a catalytic residue.

The protein belongs to the thiolase-like superfamily. FabH family. In terms of assembly, homodimer.

It localises to the cytoplasm. It catalyses the reaction malonyl-[ACP] + acetyl-CoA + H(+) = 3-oxobutanoyl-[ACP] + CO2 + CoA. The protein operates within lipid metabolism; fatty acid biosynthesis. Its function is as follows. Catalyzes the condensation reaction of fatty acid synthesis by the addition to an acyl acceptor of two carbons from malonyl-ACP. Catalyzes the first condensation reaction which initiates fatty acid synthesis and may therefore play a role in governing the total rate of fatty acid production. Possesses both acetoacetyl-ACP synthase and acetyl transacylase activities. Its substrate specificity determines the biosynthesis of branched-chain and/or straight-chain of fatty acids. This is Beta-ketoacyl-[acyl-carrier-protein] synthase III from Chlorobaculum tepidum (strain ATCC 49652 / DSM 12025 / NBRC 103806 / TLS) (Chlorobium tepidum).